The sequence spans 489 residues: ERO1-like protein alpha (489 aa).

The signal sequence occupies residues 1 to 20 (METCVLLLGLFLTSVHVTTA). Intrachain disulfides connect cysteine 27-cysteine 40, cysteine 29-cysteine 38, cysteine 77-cysteine 382, cysteine 86-cysteine 91, cysteine 86-cysteine 123, cysteine 91-cysteine 96, cysteine 200-cysteine 232, and cysteine 385-cysteine 388. Arginine 179, threonine 181, and tryptophan 192 together coordinate FAD. FAD contacts are provided by serine 243 and histidine 246. N-linked (GlcNAc...) asparagine glycosylation is present at asparagine 271. The FAD site is built by arginine 278 and arginine 291. N-linked (GlcNAc...) asparagine glycosylation occurs at asparagine 375.

The protein belongs to the EROs family. In terms of assembly, predominantly monomer. May function both as a monomer and a homodimer. It depends on FAD as a cofactor. In terms of processing, the Cys-86/Cys-91 and Cys-385/Cys-388 disulfide bonds constitute the redox-active center. The Cys-86/Cys-91 disulfide bond may accept electron from protein disulfide isomerase (PDI) and funnel them to the active site disulfide Cys-385/Cys-388.

The protein localises to the endoplasmic reticulum membrane. With respect to regulation, enzyme activity is tightly regulated to prevent the accumulation of reactive oxygen species in the endoplasmic reticulum. Reversibly down-regulated by the formation of disulfide bonds between the active site Cys-86 and Cys-123, and between Cys-91 and Cys-96. Glutathione may be required to regulate its activity in the endoplasmic reticulum. Oxidoreductase involved in disulfide bond formation in the endoplasmic reticulum. Efficiently reoxidizes P4HB/PDI, the enzyme catalyzing protein disulfide formation, in order to allow P4HB to sustain additional rounds of disulfide formation. Following P4HB reoxidation, passes its electrons to molecular oxygen via FAD, leading to the production of reactive oxygen species (ROS) in the cell. Required for the folding of immunoglobulins. The chain is ERO1-like protein alpha from Danio rerio (Zebrafish).